A 256-amino-acid chain; its full sequence is Pimeloyl-[acyl-carrier protein] methyl ester esterase (256 aa).

The AB hydrolase-1 domain occupies H15–P242. Substrate-binding positions include W22, S82–L83, and F143–Q147. S82 serves as the catalytic Nucleophile. Residues D207 and H235 contribute to the active site. H235 serves as a coordination point for substrate.

This sequence belongs to the AB hydrolase superfamily. Carboxylesterase BioH family. As to quaternary structure, monomer.

The protein resides in the cytoplasm. The catalysed reaction is 6-carboxyhexanoyl-[ACP] methyl ester + H2O = 6-carboxyhexanoyl-[ACP] + methanol + H(+). The protein operates within cofactor biosynthesis; biotin biosynthesis. The physiological role of BioH is to remove the methyl group introduced by BioC when the pimeloyl moiety is complete. It allows to synthesize pimeloyl-ACP via the fatty acid synthetic pathway through the hydrolysis of the ester bonds of pimeloyl-ACP esters. This chain is Pimeloyl-[acyl-carrier protein] methyl ester esterase, found in Escherichia coli O8 (strain IAI1).